We begin with the raw amino-acid sequence, 423 residues long: UDP-N-acetylglucosamine 1-carboxyvinyltransferase 2 (423 aa).

A phosphoenolpyruvate-binding site is contributed by 23-24 (KN). Position 95 (arginine 95) interacts with UDP-N-acetyl-alpha-D-glucosamine. Catalysis depends on cysteine 119, which acts as the Proton donor. Position 119 is a 2-(S-cysteinyl)pyruvic acid O-phosphothioketal (cysteine 119). UDP-N-acetyl-alpha-D-glucosamine contacts are provided by aspartate 306 and isoleucine 328.

It belongs to the EPSP synthase family. MurA subfamily.

The protein resides in the cytoplasm. The catalysed reaction is phosphoenolpyruvate + UDP-N-acetyl-alpha-D-glucosamine = UDP-N-acetyl-3-O-(1-carboxyvinyl)-alpha-D-glucosamine + phosphate. It functions in the pathway cell wall biogenesis; peptidoglycan biosynthesis. Cell wall formation. Adds enolpyruvyl to UDP-N-acetylglucosamine. In Symbiobacterium thermophilum (strain DSM 24528 / JCM 14929 / IAM 14863 / T), this protein is UDP-N-acetylglucosamine 1-carboxyvinyltransferase 2.